A 282-amino-acid polypeptide reads, in one-letter code: F-box protein VBF (282 aa).

The region spanning 1 to 44 (MMMLPEACIANILAFTSPADAFSSSEVSSVFRLAGDSDFVWEKF) is the F-box domain.

In terms of assembly, component of SCF(VBF) E3 ubiquitin ligase complex that interacts with VIP1. Interacts directly with SKP1A and VIP1. Forms a complex composed of VIP1, VBF and Agrobacterium virE2.

Its function is as follows. Component of SCF(VBF) E3 ubiquitin ligase complexes, which mediate the ubiquitination and subsequent proteasomal degradation of target proteins such as VIP1 and Agrobacterium virE2, after their implication in T-DNA translocation to the host nucleus (can functionally replace Agrobacterium VirF). Required during Agrobacterium-induced tumor formation. The sequence is that of F-box protein VBF (VBF) from Arabidopsis thaliana (Mouse-ear cress).